A 403-amino-acid chain; its full sequence is SEC14-like protein 4 (403 aa).

In terms of domain architecture, CRAL-TRIO spans 76 to 249 (APEVIQLYDS…EFGGTMTDPD (174 aa)). In terms of domain architecture, GOLD spans 275 to 383 (RPQYEHSVVV…TKKVGYTAEV (109 aa)).

In terms of biological role, probable hydrophobic ligand-binding protein; may play a role in the transport of hydrophobic ligands like tocopherol, squalene and phospholipids. The protein is SEC14-like protein 4 (Sec14l4) of Mus musculus (Mouse).